We begin with the raw amino-acid sequence, 613 residues long: 4-hydroxy-3-methylbut-2-en-1-yl diphosphate synthase (flavodoxin) (613 aa).

Positions 514, 517, 548, and 555 each coordinate [4Fe-4S] cluster.

It belongs to the IspG family. [4Fe-4S] cluster is required as a cofactor.

The catalysed reaction is (2E)-4-hydroxy-3-methylbut-2-enyl diphosphate + oxidized [flavodoxin] + H2O + 2 H(+) = 2-C-methyl-D-erythritol 2,4-cyclic diphosphate + reduced [flavodoxin]. The protein operates within isoprenoid biosynthesis; isopentenyl diphosphate biosynthesis via DXP pathway; isopentenyl diphosphate from 1-deoxy-D-xylulose 5-phosphate: step 5/6. Functionally, converts 2C-methyl-D-erythritol 2,4-cyclodiphosphate (ME-2,4cPP) into 1-hydroxy-2-methyl-2-(E)-butenyl 4-diphosphate. In Chlamydia pneumoniae (Chlamydophila pneumoniae), this protein is 4-hydroxy-3-methylbut-2-en-1-yl diphosphate synthase (flavodoxin).